The following is a 222-amino-acid chain: Recombination protein RecR (222 aa).

The segment at C57 to C72 adopts a C4-type zinc-finger fold. The Toprim domain occupies S80 to P173. The disordered stretch occupies residues A189 to H222.

It belongs to the RecR family.

In terms of biological role, may play a role in DNA repair. It seems to be involved in an RecBC-independent recombinational process of DNA repair. It may act with RecF and RecO. This chain is Recombination protein RecR, found in Deinococcus geothermalis (strain DSM 11300 / CIP 105573 / AG-3a).